The chain runs to 187 residues: Anterior gradient protein 1 (187 aa).

Positions 1-20 (MQTGLSLVCLVLLCSALGEA) are cleaved as a signal peptide.

It belongs to the AGR family.

It localises to the secreted. Probably involved in cement gland formation. The polypeptide is Anterior gradient protein 1 (ag1) (Xenopus tropicalis (Western clawed frog)).